We begin with the raw amino-acid sequence, 302 residues long: Protein FdhE homolog (302 aa).

This sequence belongs to the FdhE family.

The protein resides in the cytoplasm. Functionally, necessary for formate dehydrogenase activity. This is Protein FdhE homolog from Haemophilus influenzae (strain PittGG).